Consider the following 492-residue polypeptide: Probable malate:quinone oxidoreductase 1 (492 aa).

Belongs to the MQO family. Requires FAD as cofactor.

The enzyme catalyses (S)-malate + a quinone = a quinol + oxaloacetate. It participates in carbohydrate metabolism; tricarboxylic acid cycle; oxaloacetate from (S)-malate (quinone route): step 1/1. The sequence is that of Probable malate:quinone oxidoreductase 1 from Staphylococcus epidermidis (strain ATCC 35984 / DSM 28319 / BCRC 17069 / CCUG 31568 / BM 3577 / RP62A).